Consider the following 853-residue polypeptide: Lysine-specific histone demethylase 1A (853 aa).

A disordered region spans residues 1-177; sequence MLSGKKAAAA…EPEEPSGVEG (177 aa). A compositionally biased stretch (low complexity) spans 7–26; the sequence is AAAAAAAAAAAAAAGTEAGS. The residue at position 60 (threonine 60) is a Phosphothreonine. Over residues 76-97 the composition is skewed to low complexity; it reads AEPPGSAGPQAGPTAGPGSATP. Threonine 105 is subject to Phosphothreonine. A coiled-coil region spans residues 111 to 152; that stretch reads TSRRKRAKVEYREMDESLANLSEDEYYSEEERNAKAEKEKKL. Phosphoserine is present on residues serine 127 and serine 132. A Phosphotyrosine modification is found at tyrosine 136. Serine 138 carries the phosphoserine modification. The span at 139 to 152 shows a compositional bias: basic and acidic residues; the sequence is EEERNAKAEKEKKL. Residues 161–173 show a composition bias toward acidic residues; it reads PEEENESEPEEPS. Serine 167 is modified (phosphoserine). Residues 175-274 enclose the SWIRM domain; it reads VEGAAFQSRL…FGIYKRIKPL (100 aa). Residues serine 290, glutamate 309, arginine 311, arginine 317, and 333 to 334 contribute to the FAD site; that span reads MV. The segment at 301-853 is demethylase activity; that stretch reads FGMDVTLLEA…GVPAQQSPSM (553 aa). Residues 429–515 adopt a coiled-coil conformation; sequence IEHWKKIVKT…EEKLQELEAN (87 aa). N6-acetyllysine is present on residues lysine 433, lysine 434, and lysine 437. Glycyl lysine isopeptide (Lys-Gly) (interchain with G-Cter in SUMO2) cross-links involve residues lysine 443 and lysine 470. Lysine 504 is covalently cross-linked (Glycyl lysine isopeptide (Lys-Gly) (interchain with G-Cter in ubiquitin)). A Phosphoserine modification is found at serine 612. FAD contacts are provided by residues glutamate 802 and 811–812; that span reads TV. At serine 850 the chain carries Phosphoserine.

This sequence belongs to the flavin monoamine oxidase family. In terms of assembly, component of a histone demethylase complex with RCOR1. Component of a BHC histone deacetylase complex that contains HDAC1, HDAC2, HMG20B, KDM1A, RCOR1 and PHF21A. The BHC complex may also contain ZMYM2, ZNF217, ZMYM3, GSE1 and GTF2I. In the complex, RCOR1 strongly enhances the demethylase activity and protects it from the proteasome while PHF21A inhibits the demethylase activity. Interacts with the androgen receptor (AR). Component of a RCOR/GFI/KDM1A/HDAC complex. Interacts directly with GFI1 and GFI1B. Interacts with SNAI1 (via SNAG domain). Interacts with INSM1. Interacts (via AOD/Tower domain) with JADE2 (via C-terminus). Interacts with ESRRB; co-occupes the core set of ESRRB targets. Interacts with SAMD1 (via WH domain); the interaction modulates KDM1A function. Interacts with RBPJ. Interacts with L3MBTL3. Interacts with ZMYND8. The cofactor is FAD. In terms of processing, acetylated by KAT8 in epithelial but not in mesenchymal cells, thereby regulating the epithelial-to-mesenchymal transition. Acetylation by KAT8 reduces KDM1A association with nucleosomes, thereby decreasing histone H3 demethylation, leading to transcription activatio of target genes. Polyubiquitinated by JADE2; which leads to its proteasomal degradation. Deubiquitinated by USP38; preventing it from degradation by the 26S proteasome. Ubiquitously expressed.

It localises to the nucleus. The protein resides in the chromosome. The enzyme catalyses N(6),N(6)-dimethyl-L-lysyl(4)-[histone H3] + 2 A + 2 H2O = L-lysyl(4)-[histone H3] + 2 formaldehyde + 2 AH2. Its activity is regulated as follows. The N-terminal sequences of INSM1 and SNAI1 compete with histone H3 for the same binding site and thereby inhibit histone demethylation (in vitro). Functionally, histone demethylase that can demethylate both 'Lys-4' (H3K4me) and 'Lys-9' (H3K9me) of histone H3, thereby acting as a coactivator or a corepressor, depending on the context. Acts by oxidizing the substrate by FAD to generate the corresponding imine that is subsequently hydrolyzed. Acts as a corepressor by mediating demethylation of H3K4me, a specific tag for epigenetic transcriptional activation. Demethylates both mono- (H3K4me1) and di-methylated (H3K4me2) H3K4me. May play a role in the repression of neuronal genes. Alone, it is unable to demethylate H3K4me on nucleosomes and requires the presence of RCOR1/CoREST to achieve such activity. Also acts as a coactivator of androgen receptor (ANDR)-dependent transcription, by being recruited to ANDR target genes and mediating demethylation of H3K9me, a specific tag for epigenetic transcriptional repression. The presence of PRKCB in ANDR-containing complexes, which mediates phosphorylation of 'Thr-6' of histone H3 (H3T6ph), a specific tag that prevents demethylation H3K4me, prevents H3K4me demethylase activity of KDM1A. Demethylates di-methylated 'Lys-370' of p53/TP53 which prevents interaction of p53/TP53 with TP53BP1 and represses p53/TP53-mediated transcriptional activation. Demethylates and stabilizes the DNA methylase DNMT1. Demethylates methylated 'Lys-44' and methylated 'Lys-119' of SOX2. Required for gastrulation during embryogenesis. Component of a RCOR/GFI/KDM1A/HDAC complex that suppresses, via histone deacetylase (HDAC) recruitment, a number of genes implicated in multilineage blood cell development. Facilitates epithelial-to-mesenchymal transition by acting as an effector of SNAI1-mediated transcription repression of epithelial markers E-cadherin/CDH1, CDN7 and KRT8. Required for the maintenance of the silenced state of the SNAI1 target genes E-cadherin/CDH1 and CDN7. Required for the repression of GIPR expression. The polypeptide is Lysine-specific histone demethylase 1A (Mus musculus (Mouse)).